The sequence spans 292 residues: uncharacterized protein (292 aa).

One can recognise an HTH lysR-type domain in the interval 1–58 (MEWEQLEYFQTLARMQHVTKAAKSLSITQPALSRSIARLENHLGVPLFDRQGRSISLN). The H-T-H motif DNA-binding region spans 18 to 37 (VTKAAKSLSITQPALSRSIA).

It belongs to the LysR transcriptional regulatory family.

This is an uncharacterized protein from Bacillus subtilis (strain 168).